The sequence spans 430 residues: Adenylosuccinate synthetase (430 aa).

GTP is bound by residues 13 to 19 and 41 to 43; these read GDEGKGK and GHT. The active-site Proton acceptor is the aspartate 14. Mg(2+) contacts are provided by aspartate 14 and glycine 41. IMP-binding positions include 14 to 17, 39 to 42, threonine 130, arginine 144, glutamine 225, threonine 240, and arginine 304; these read DEGK and NAGH. Residue histidine 42 is the Proton donor of the active site. 300–306 is a substrate binding site; the sequence is ATTGRAR. GTP is bound by residues arginine 306, 332-334, and 414-416; these read KLD and STG.

It belongs to the adenylosuccinate synthetase family. As to quaternary structure, homodimer. Requires Mg(2+) as cofactor.

Its subcellular location is the cytoplasm. It catalyses the reaction IMP + L-aspartate + GTP = N(6)-(1,2-dicarboxyethyl)-AMP + GDP + phosphate + 2 H(+). It participates in purine metabolism; AMP biosynthesis via de novo pathway; AMP from IMP: step 1/2. Functionally, plays an important role in the de novo pathway of purine nucleotide biosynthesis. Catalyzes the first committed step in the biosynthesis of AMP from IMP. The protein is Adenylosuccinate synthetase of Pseudomonas fluorescens (strain ATCC BAA-477 / NRRL B-23932 / Pf-5).